We begin with the raw amino-acid sequence, 465 residues long: Serine carboxypeptidase-like 19 (465 aa).

An N-terminal signal peptide occupies residues 1-23; the sequence is MRNLSFIVLFLLTLFFIHHLVDA. 77–79 provides a ligand contact to substrate; it reads TGG. 3 disulfide bridges follow: C82–C353, C246–C260, and C284–C320. N-linked (GlcNAc...) asparagine glycosylation occurs at N103. 177 to 179 contacts substrate; sequence DSY. The active site involves S178. A propeptide spans 292 to 317 (linker peptide); the sequence is DTPNIRTDRRRVMKEFSVNDSSSLPP. N-linked (GlcNAc...) asparagine glycosylation is found at N310 and N373. D389 is an active-site residue. The N-linked (GlcNAc...) asparagine glycan is linked to N405. Residue 439–443 coordinates substrate; it reads KGGGH. H443 is a catalytic residue.

Belongs to the peptidase S10 family. As to quaternary structure, heterodimer. N-glycosylated. Expressed in roots and flowers, and at lower levels in young leaves and seedlings. Expressed in mature seeds and detected in expanding siliques.

It is found in the secreted. The enzyme catalyses 1-O-(trans-sinapoyl)-beta-D-glucose + choline = O-sinapoylcholine + D-glucose. Its activity is regulated as follows. Slightly inhibited by phenylmethylsulfonyl fluoride (PMSF). Functionally, involved in plants secondary metabolism. Functions as acyltransferase to form the sinapate ester sinapoylcholine also known as sinapine. Able to convert in vitro benzoylglucose into benzoylcholine. The sequence is that of Serine carboxypeptidase-like 19 from Arabidopsis thaliana (Mouse-ear cress).